A 337-amino-acid polypeptide reads, in one-letter code: Ribosomal RNA small subunit methyltransferase H (337 aa).

S-adenosyl-L-methionine-binding positions include 33–35 (AGH), Asp53, Asp101, and Gln108.

Belongs to the methyltransferase superfamily. RsmH family.

The protein resides in the cytoplasm. The catalysed reaction is cytidine(1402) in 16S rRNA + S-adenosyl-L-methionine = N(4)-methylcytidine(1402) in 16S rRNA + S-adenosyl-L-homocysteine + H(+). In terms of biological role, specifically methylates the N4 position of cytidine in position 1402 (C1402) of 16S rRNA. The protein is Ribosomal RNA small subunit methyltransferase H of Herpetosiphon aurantiacus (strain ATCC 23779 / DSM 785 / 114-95).